The primary structure comprises 230 residues: Androgen-dependent TFPI-regulating protein (230 aa).

At 1-7 (MTKTTTC) the chain is on the cytoplasmic side. A helical transmembrane segment spans residues 8–28 (VYHFLVLNWYIFLNYHIPQIG). Residues 29-45 (RNEEKLREFHDGGRSKY) are Extracellular-facing. The helical transmembrane segment at 46-66 (LTLLNLLLQAIFFGVACLDDV) threads the bilayer. Over 67-85 (LKRVIGRKDIKFVTSFRDL) the chain is Cytoplasmic. Residues 86 to 106 (LFTTMAFPISTFVFLVFWTLF) form a helical membrane-spanning segment. The Extracellular portion of the chain corresponds to 107 to 120 (HYDRSLVYPKGLDD). The chain crosses the membrane as a helical span at residues 121 to 141 (FFPAWVNHAMHTSIFPFSLFE). The Cytoplasmic portion of the chain corresponds to 142-154 (TILRPHNYPSKKL). The helical transmembrane segment at 155–175 (GLTLLGAFNFAYIIRILWRYV) threads the bilayer. The Extracellular segment spans residues 176–190 (QTGNWVYPVFDSLSP). Residues 191–211 (LGIIIFFSAAYILVAGIYLFG) form a helical membrane-spanning segment. Residues 212-230 (EKINHWKWGAIAKPQMKKN) lie on the Cytoplasmic side of the membrane.

The protein belongs to the AIG1 family.

It is found in the cell membrane. The enzyme catalyses 9-hexadecanoyloxy-octadecanoate + H2O = 9-hydroxy-octadecanoate + hexadecanoate + H(+). It carries out the reaction 12-hexadecanoyloxy-octadecanoate + H2O = 12-hydroxyoctadecanoate + hexadecanoate + H(+). It catalyses the reaction 9-(9Z-hexadecenoyloxy)-octadecanoate + H2O = (9Z)-hexadecenoate + 9-hydroxy-octadecanoate + H(+). The catalysed reaction is 12-(9Z-hexadecenoyloxy)-octadecanoate + H2O = 12-hydroxyoctadecanoate + (9Z)-hexadecenoate + H(+). The enzyme catalyses 13-(9Z-hexadecenoyloxy)-octadecanoate + H2O = 13-hydroxy-octadecanoate + (9Z)-hexadecenoate + H(+). It carries out the reaction 9-octadecanoyloxy-octadecanoate + H2O = 9-hydroxy-octadecanoate + octadecanoate + H(+). It catalyses the reaction 12-octadecanoyloxy-octadecanoate + H2O = 12-hydroxyoctadecanoate + octadecanoate + H(+). The catalysed reaction is 13-octadecanoyloxy-octadecanoate + H2O = 13-hydroxy-octadecanoate + octadecanoate + H(+). The enzyme catalyses 9-(9Z-octadecenoyloxy)-octadecanoate + H2O = 9-hydroxy-octadecanoate + (9Z)-octadecenoate + H(+). It carries out the reaction 12-(9Z-octadecenoyloxy)-octadecanoate + H2O = 12-hydroxyoctadecanoate + (9Z)-octadecenoate + H(+). It catalyses the reaction 13-(9Z-octadecenoyloxy)-octadecanoate + H2O = 13-hydroxy-octadecanoate + (9Z)-octadecenoate + H(+). The catalysed reaction is 5-(9Z-octadecenoyloxy)-octadecanoate + H2O = 5-hydroxy-octadecanoate + (9Z)-octadecenoate + H(+). Its function is as follows. Hydrolyzes bioactive fatty-acid esters of hydroxy-fatty acids (FAHFAs), but not other major classes of lipids. Shows a preference for FAHFAs with branching distal from the carboxylate head group of the lipids. Regulates the expression and the cell-associated anticoagulant activity of the inhibitor TFPI in endothelial cells (in vitro). This chain is Androgen-dependent TFPI-regulating protein (Adtrp), found in Mus musculus (Mouse).